The primary structure comprises 414 residues: Serine hydroxymethyltransferase (414 aa).

Residues Leu-117 and 121–123 (GHL) contribute to the (6S)-5,6,7,8-tetrahydrofolate site. Position 226 is an N6-(pyridoxal phosphate)lysine (Lys-226). 349-351 (SPF) provides a ligand contact to (6S)-5,6,7,8-tetrahydrofolate.

Belongs to the SHMT family. As to quaternary structure, homodimer. Requires pyridoxal 5'-phosphate as cofactor.

The protein resides in the cytoplasm. It carries out the reaction (6R)-5,10-methylene-5,6,7,8-tetrahydrofolate + glycine + H2O = (6S)-5,6,7,8-tetrahydrofolate + L-serine. It functions in the pathway one-carbon metabolism; tetrahydrofolate interconversion. The protein operates within amino-acid biosynthesis; glycine biosynthesis; glycine from L-serine: step 1/1. Catalyzes the reversible interconversion of serine and glycine with tetrahydrofolate (THF) serving as the one-carbon carrier. Also exhibits THF-independent aldolase activity toward beta-hydroxyamino acids, producing glycine and aldehydes, via a retro-aldol mechanism. The polypeptide is Serine hydroxymethyltransferase (Methanospirillum hungatei JF-1 (strain ATCC 27890 / DSM 864 / NBRC 100397 / JF-1)).